A 328-amino-acid chain; its full sequence is Ketol-acid reductoisomerase (NADP(+)) (328 aa).

Positions 2-182 (AKIYRDVDAS…GATRAGVIET (181 aa)) constitute a KARI N-terminal Rossmann domain. NADP(+) is bound by residues 25–28 (YGIQ), R48, S53, and 83–86 (DMEQ). H108 is an active-site residue. G134 contributes to the NADP(+) binding site. Positions 183–328 (TFAEETETDL…IEMRRLLFGQ (146 aa)) constitute a KARI C-terminal knotted domain. The Mg(2+) site is built by D191, E195, E227, and E231. S252 serves as a coordination point for substrate.

It belongs to the ketol-acid reductoisomerase family. It depends on Mg(2+) as a cofactor.

It catalyses the reaction (2R)-2,3-dihydroxy-3-methylbutanoate + NADP(+) = (2S)-2-acetolactate + NADPH + H(+). The catalysed reaction is (2R,3R)-2,3-dihydroxy-3-methylpentanoate + NADP(+) = (S)-2-ethyl-2-hydroxy-3-oxobutanoate + NADPH + H(+). The protein operates within amino-acid biosynthesis; L-isoleucine biosynthesis; L-isoleucine from 2-oxobutanoate: step 2/4. It participates in amino-acid biosynthesis; L-valine biosynthesis; L-valine from pyruvate: step 2/4. In terms of biological role, involved in the biosynthesis of branched-chain amino acids (BCAA). Catalyzes an alkyl-migration followed by a ketol-acid reduction of (S)-2-acetolactate (S2AL) to yield (R)-2,3-dihydroxy-isovalerate. In the isomerase reaction, S2AL is rearranged via a Mg-dependent methyl migration to produce 3-hydroxy-3-methyl-2-ketobutyrate (HMKB). In the reductase reaction, this 2-ketoacid undergoes a metal-dependent reduction by NADPH to yield (R)-2,3-dihydroxy-isovalerate. The sequence is that of Ketol-acid reductoisomerase (NADP(+)) from Pyrobaculum arsenaticum (strain DSM 13514 / JCM 11321 / PZ6).